Consider the following 163-residue polypeptide: Large ribosomal subunit protein uL15 (163 aa).

Positions 1–43 (MKLNEIADNEGSRKKRTRVGRGIGSGKGKQSGRGGKGQTARSG) are disordered. Positions 21-37 (RGIGSGKGKQSGRGGKG) are enriched in gly residues.

The protein belongs to the universal ribosomal protein uL15 family. Part of the 50S ribosomal subunit.

Binds to the 23S rRNA. The polypeptide is Large ribosomal subunit protein uL15 (Afipia carboxidovorans (strain ATCC 49405 / DSM 1227 / KCTC 32145 / OM5) (Oligotropha carboxidovorans)).